Here is a 290-residue protein sequence, read N- to C-terminus: Porphobilinogen deaminase (290 aa).

C237 carries the post-translational modification S-(dipyrrolylmethanemethyl)cysteine.

Belongs to the HMBS family. In terms of assembly, monomer. Dipyrromethane serves as cofactor.

It carries out the reaction 4 porphobilinogen + H2O = hydroxymethylbilane + 4 NH4(+). It functions in the pathway porphyrin-containing compound metabolism; protoporphyrin-IX biosynthesis; coproporphyrinogen-III from 5-aminolevulinate: step 2/4. Tetrapolymerization of the monopyrrole PBG into the hydroxymethylbilane pre-uroporphyrinogen in several discrete steps. This is Porphobilinogen deaminase from Clostridium botulinum (strain Loch Maree / Type A3).